The chain runs to 266 residues: Transcription factor BIP1 (266 aa).

The disordered stretch occupies residues 1–73; it reads MAMYMPSTAS…DREAQRAIRA (73 aa). Polar residues-rich tracts occupy residues 7–22 and 47–56; these read STAS…SGTP and RSVSTLTPSQ. One can recognise a bZIP domain in the interval 54–95; that stretch reads PSQLARKRANDREAQRAIRARTKEHIERLEREVEELKSKQNR. The basic motif stretch occupies residues 59 to 81; the sequence is RKRANDREAQRAIRARTKEHIER. A compositionally biased stretch (basic and acidic residues) spans 61 to 73; the sequence is RANDREAQRAIRA. Positions 82 to 89 are leucine-zipper; it reads LEREVEEL.

It belongs to the bZIP family. Expressed in appressoria.

The protein localises to the nucleus. Functionally, transcription factor that is required for infection of plants hosts. Is not implicated in the development of appressoria or the subsequent penetration of host leaves, but is necessary for the initial establishment of the fungus within plant cells by orchestrating the expression of a unique set of early invasion-related genes within appressoria, encoding secreted effectors, enzymes, secondary metabolism-related enzymes, and signaling membrane receptors. Controls the expression of targeted genes by interacting directly with a 5'-TGACTC-3' motif present in their promoters. The sequence is that of Transcription factor BIP1 from Pyricularia oryzae (strain 70-15 / ATCC MYA-4617 / FGSC 8958) (Rice blast fungus).